Here is a 255-residue protein sequence, read N- to C-terminus: Small ribosomal subunit protein uS2 (255 aa).

The interval 233–255 (DFVAEEAASEESLEELAEIVEGK) is disordered.

This sequence belongs to the universal ribosomal protein uS2 family.

The chain is Small ribosomal subunit protein uS2 (rpsB) from Lactococcus lactis subsp. lactis (strain IL1403) (Streptococcus lactis).